We begin with the raw amino-acid sequence, 171 residues long: MLKRIIWILFLLGLTWGCELFAHDGTVNISGSFRRNTCVLAQDSKQINVQLGDVSLTRFSHGNYGPEKSFIINLQDCGTDVSTVDVTFSGTPDGVQSEMLSIESGTDAASGLAIAILDDAKILIPLNQASKDYSLHSGKVPLTFYAQLRPVNSDVQSGKVNASATFVLHYD.

Positions 1-17 are cleaved as a signal peptide; that stretch reads MLKRIIWILFLLGLTWG.

Part of the elfADCG-ycbUVF fimbrial operon, which promotes adhesion of bacteria to different abiotic surfaces. This is an uncharacterized protein from Escherichia coli (strain K12).